Consider the following 656-residue polypeptide: RNA-binding protein EWS (656 aa).

Residues 1–285 are EAD (Gln/Pro/Thr-rich); the sequence is MASTDYSTYS…GVYGQESGGF (285 aa). Repeat copies occupy residues 8 to 16, 17 to 27, 28 to 34, 35 to 42, 43 to 50, 51 to 59, 60 to 68, 69 to 75, 76 to 84, 85 to 91, 92 to 110, 111 to 116, 117 to 125, 126 to 156, 157 to 163, 164 to 170, 171 to 177, 178 to 188, 189 to 193, 194 to 201, 202 to 206, 207 to 212, 213 to 218, 219 to 224, 225 to 230, 231 to 238, 239 to 245, 246 to 252, 253 to 259, 260 to 276, and 277 to 285. The segment at 8 to 285 is 31 X approximate tandem repeats; the sequence is TYSQAAAQQG…GVYGQESGGF (278 aa). Over residues 123–137 the composition is skewed to low complexity; the sequence is AYPAYGQQPAATAPT. Positions 123 to 360 are disordered; that stretch reads AYPAYGQQPA…PVDPDEDSDN (238 aa). The segment covering 143–172 has biased composition (polar residues); sequence NKPTETSQPQSSTGGYNQPSLGYGQSNYSY. Residues 192–266 are compositionally biased toward low complexity; it reads PTSYSSTQPT…QSSSYGQQSS (75 aa). The IQ domain occupies 256 to 285; it reads QQSSSYGQQSSFRQDHPSSMGVYGQESGGF. S266 is modified (phosphoserine; by PKC). Residues R300, R302, R304, R309, R314, R317, and R321 each carry the asymmetric dimethylarginine modification. Gly residues predominate over residues 308 to 335; sequence DRGGMSRGGRGGGRGGMGSAGERGGFNK. Residues 336–350 are compositionally biased toward low complexity; sequence PGGPMDEGPDLDLGP. Positions 361–447 constitute an RRM domain; that stretch reads SAIYVQGLND…SKLKVSLARK (87 aa). K439 bears the N6-acetyllysine mark. Disordered regions lie at residues 448–525 and 547–656; these read KPPM…WQCP and KPEG…DRPY. Asymmetric dimethylarginine is present on residues R455 and R464. An Asymmetric dimethylarginine; alternate modification is found at R471. R471 is modified (omega-N-methylarginine; alternate). The segment covering 472–490 has biased composition (gly residues); the sequence is GGPGGPGGPGGPMGRMGGR. Omega-N-methylarginine is present on R486. Position 490 is an asymmetric dimethylarginine; by PRMT8 (R490). Asymmetric dimethylarginine is present on residues R494, R500, and R503. R506 is subject to Asymmetric dimethylarginine; alternate. R506 is modified (omega-N-methylarginine; alternate). The RanBP2-type zinc-finger motif lies at 518–549; it reads RAGDWQCPNPGCGNQNFAWRTECNQCKAPKPE. Residues 551-560 show a composition bias toward pro residues; it reads FLPPPFPPPG. Asymmetric dimethylarginine is present on residues R563 and R565. The segment covering 566-591 has biased composition (gly residues); it reads GGPGGMRGGRGGLMDRGGPGGMFRGG. R572 is modified (asymmetric dimethylarginine; alternate; by PRMT8). Residue R572 is modified to Omega-N-methylarginine; alternate; by PRMT8. 4 positions are modified to asymmetric dimethylarginine: R575, R581, R589, and R592. Over residues 592–606 the composition is skewed to basic and acidic residues; sequence RGGDRGGFRGGRGMD. R596 is subject to Asymmetric dimethylarginine; alternate; by PRMT8. R596 carries the post-translational modification Omega-N-methylarginine; alternate; by PRMT8. R600 is modified (asymmetric dimethylarginine). R603 bears the Asymmetric dimethylarginine; by PRMT8 mark. R607 bears the Asymmetric dimethylarginine; alternate; by PRMT8 mark. An Omega-N-methylarginine; alternate; by PRMT8 modification is found at R607. Residues 607 to 618 show a composition bias toward gly residues; the sequence is RGGFGGGRRGGP. Position 615 is an asymmetric dimethylarginine; alternate (R615). R615 is subject to Omega-N-methylarginine; alternate. Residues R633 and R636 each carry the asymmetric dimethylarginine modification. The Nuclear localization signal motif lies at 639–656; the sequence is PGKMDKGEHRQERRDRPY. A compositionally biased stretch (basic and acidic residues) spans 641–656; sequence KMDKGEHRQERRDRPY.

Belongs to the RRM TET family. As to quaternary structure, binds POLR2C, SF1, calmodulin and RNA. Interacts with PTK2B/FAK2 and TDRD3. Binds calmodulin in the presence, but not in the absence, of calcium ion. Forms a complex with REC8, PRDM9, SYCP3 and SYCP1; complex formation is dependent of phosphorylated form of REC8 and requires PRDM9 bound to hotspot DNA; EWSR1 joins PRDM9 with the chromosomal axis through REC8. Post-translationally, phosphorylated; calmodulin-binding inhibits phosphorylation of Ser-266. Highly methylated on arginine residues. Methylation is mediated by PRMT1 and, at lower level by PRMT8. As to expression, ubiquitous.

The protein localises to the nucleus. Its subcellular location is the cytoplasm. It is found in the cell membrane. Functionally, binds to ssRNA containing the consensus sequence 5'-AGGUAA-3'. Might normally function as a transcriptional repressor. EWS-fusion-proteins (EFPS) may play a role in the tumorigenic process. They may disturb gene expression by mimicking, or interfering with the normal function of CTD-POLII within the transcription initiation complex. They may also contribute to an aberrant activation of the fusion protein target genes. This chain is RNA-binding protein EWS (EWSR1), found in Homo sapiens (Human).